Here is a 97-residue protein sequence, read N- to C-terminus: Peptide Y (97 aa).

The first 28 residues, 1 to 28 (MANMLRSWMMLAALAVCLLVCLSSFADA), serve as a signal peptide directing secretion. Y64 is subject to Tyrosine amide. A propeptide spans 68–97 (STPEQAVAWLLFGADSSQDAEPRLDYSDQW) (C-terminal extension).

The protein belongs to the NPY family.

The protein localises to the secreted. This is Peptide Y from Dicentrarchus labrax (European seabass).